Consider the following 119-residue polypeptide: Holo-[acyl-carrier-protein] synthase (119 aa).

Residues Asp8 and Glu60 each coordinate Mg(2+).

This sequence belongs to the P-Pant transferase superfamily. AcpS family. Requires Mg(2+) as cofactor.

It localises to the cytoplasm. The catalysed reaction is apo-[ACP] + CoA = holo-[ACP] + adenosine 3',5'-bisphosphate + H(+). In terms of biological role, transfers the 4'-phosphopantetheine moiety from coenzyme A to a Ser of acyl-carrier-protein. The chain is Holo-[acyl-carrier-protein] synthase from Staphylococcus haemolyticus (strain JCSC1435).